A 294-amino-acid chain; its full sequence is Ribosomal protein L11 methyltransferase (294 aa).

S-adenosyl-L-methionine-binding residues include threonine 144, glycine 165, aspartate 187, and asparagine 229.

The protein belongs to the methyltransferase superfamily. PrmA family.

The protein localises to the cytoplasm. It catalyses the reaction L-lysyl-[protein] + 3 S-adenosyl-L-methionine = N(6),N(6),N(6)-trimethyl-L-lysyl-[protein] + 3 S-adenosyl-L-homocysteine + 3 H(+). Its function is as follows. Methylates ribosomal protein L11. The protein is Ribosomal protein L11 methyltransferase of Cellvibrio japonicus (strain Ueda107) (Pseudomonas fluorescens subsp. cellulosa).